A 257-amino-acid polypeptide reads, in one-letter code: NAD-capped RNA hydrolase NudC (257 aa).

Substrate is bound by residues Lys-25 and Arg-69. Residues Cys-98 and Cys-101 each contribute to the Zn(2+) site. Glu-111 is a substrate binding site. Zn(2+)-binding residues include Cys-116 and Cys-119. Tyr-124 serves as a coordination point for substrate. One can recognise a Nudix hydrolase domain in the interval 125–248 (PQIAPCIIVA…TVARRLIEDT (124 aa)). Positions 158, 174, and 178 each coordinate a divalent metal cation. The short motif at 159 to 180 (GFVEVGETLEQAVAREVMEESG) is the Nudix box element. 192-199 (QPWPFPQS) is a substrate binding site. Glu-219 contributes to the a divalent metal cation binding site. Ala-241 is a binding site for substrate.

The protein belongs to the Nudix hydrolase family. NudC subfamily. Homodimer. It depends on Mg(2+) as a cofactor. Requires Mn(2+) as cofactor. Zn(2+) is required as a cofactor.

It catalyses the reaction a 5'-end NAD(+)-phospho-ribonucleoside in mRNA + H2O = a 5'-end phospho-adenosine-phospho-ribonucleoside in mRNA + beta-nicotinamide D-ribonucleotide + 2 H(+). The catalysed reaction is NAD(+) + H2O = beta-nicotinamide D-ribonucleotide + AMP + 2 H(+). It carries out the reaction NADH + H2O = reduced beta-nicotinamide D-ribonucleotide + AMP + 2 H(+). Its function is as follows. mRNA decapping enzyme that specifically removes the nicotinamide adenine dinucleotide (NAD) cap from a subset of mRNAs by hydrolyzing the diphosphate linkage to produce nicotinamide mononucleotide (NMN) and 5' monophosphate mRNA. The NAD-cap is present at the 5'-end of some mRNAs and stabilizes RNA against 5'-processing. Has preference for mRNAs with a 5'-end purine. Catalyzes the hydrolysis of a broad range of dinucleotide pyrophosphates. The chain is NAD-capped RNA hydrolase NudC from Escherichia coli (strain 55989 / EAEC).